The following is a 295-amino-acid chain: Probable alpha-L-glutamate ligase 1 (295 aa).

Residues 104–287 (MQLLSRKGIG…VANAIIEFIE (184 aa)) enclose the ATP-grasp domain. ATP-binding positions include Lys141, 178–179 (EY), Asp187, and 211–213 (RSN). 3 residues coordinate Mg(2+): Asp248, Glu260, and Asn262. Residues Asp248, Glu260, and Asn262 each contribute to the Mn(2+) site.

Belongs to the RimK family. It depends on Mg(2+) as a cofactor. The cofactor is Mn(2+).

The chain is Probable alpha-L-glutamate ligase 1 from Shewanella denitrificans (strain OS217 / ATCC BAA-1090 / DSM 15013).